The sequence spans 404 residues: Probable tRNA sulfurtransferase (404 aa).

The 106-residue stretch at 60–165 (EEVIPKLSKV…KDAAYLSYET (106 aa)) folds into the THUMP domain. ATP contacts are provided by residues 183–184 (ML), 208–209 (HF), arginine 265, glycine 287, and glutamine 296.

The protein belongs to the ThiI family.

The protein resides in the cytoplasm. It catalyses the reaction [ThiI sulfur-carrier protein]-S-sulfanyl-L-cysteine + a uridine in tRNA + 2 reduced [2Fe-2S]-[ferredoxin] + ATP + H(+) = [ThiI sulfur-carrier protein]-L-cysteine + a 4-thiouridine in tRNA + 2 oxidized [2Fe-2S]-[ferredoxin] + AMP + diphosphate. The enzyme catalyses [ThiS sulfur-carrier protein]-C-terminal Gly-Gly-AMP + S-sulfanyl-L-cysteinyl-[cysteine desulfurase] + AH2 = [ThiS sulfur-carrier protein]-C-terminal-Gly-aminoethanethioate + L-cysteinyl-[cysteine desulfurase] + A + AMP + 2 H(+). It participates in cofactor biosynthesis; thiamine diphosphate biosynthesis. Functionally, catalyzes the ATP-dependent transfer of a sulfur to tRNA to produce 4-thiouridine in position 8 of tRNAs, which functions as a near-UV photosensor. Also catalyzes the transfer of sulfur to the sulfur carrier protein ThiS, forming ThiS-thiocarboxylate. This is a step in the synthesis of thiazole, in the thiamine biosynthesis pathway. The sulfur is donated as persulfide by IscS. In Enterococcus faecalis (strain ATCC 700802 / V583), this protein is Probable tRNA sulfurtransferase.